The sequence spans 189 residues: Threonylcarbamoyl-AMP synthase (189 aa).

The 181-residue stretch at 9–189 (ASAQRKLSVY…IDGETGKRLR (181 aa)) folds into the YrdC-like domain.

It belongs to the SUA5 family. TsaC subfamily.

The protein localises to the cytoplasm. It catalyses the reaction L-threonine + hydrogencarbonate + ATP = L-threonylcarbamoyladenylate + diphosphate + H2O. Functionally, required for the formation of a threonylcarbamoyl group on adenosine at position 37 (t(6)A37) in tRNAs that read codons beginning with adenine. Catalyzes the conversion of L-threonine, HCO(3)(-)/CO(2) and ATP to give threonylcarbamoyl-AMP (TC-AMP) as the acyladenylate intermediate, with the release of diphosphate. This is Threonylcarbamoyl-AMP synthase from Neisseria meningitidis serogroup C (strain 053442).